The following is a 211-amino-acid chain: Arginine exporter protein ArgO (211 aa).

The next 6 membrane-spanning stretches (helical) occupy residues 1-21 (MISYYFQGFALGAAMILPLGP), 37-57 (LMIALLCALSDLVLISAGIFG), 68-88 (LLALVTWGGVAFLLWYGFGAL), 111-131 (IIATMLAVTWLNPHVYLDTFV), 147-167 (WFALGTISASFLWFFGLALLA), and 179-199 (AQRIINILVGVVMWLIAFQLA).

It belongs to the LysE/ArgO transporter (TC 2.A.75) family.

Its subcellular location is the cell inner membrane. It catalyses the reaction L-arginine(in) = L-arginine(out). Involved in the export of arginine. Important to control the intracellular level of arginine and the correct balance between arginine and lysine. The chain is Arginine exporter protein ArgO from Salmonella newport (strain SL254).